Consider the following 326-residue polypeptide: Peroxidase 41 (326 aa).

Positions 1 to 20 (MSSVINVLFVVLVFVPSIYS) are cleaved as a signal peptide. The N-linked (GlcNAc...) asparagine glycan is linked to N25. Disulfide bonds link C35–C116, C68–C73, C122–C318, and C201–C228. The Proton acceptor role is filled by H66. Ca(2+) contacts are provided by D67, G72, D74, and S76. Residue P164 participates in substrate binding. An N-linked (GlcNAc...) asparagine glycan is attached at N167. H194 contacts heme b. T195 lines the Ca(2+) pocket. The N-linked (GlcNAc...) asparagine glycan is linked to N234. 3 residues coordinate Ca(2+): D242, T245, and D250. N-linked (GlcNAc...) asparagine glycosylation is present at N286.

It belongs to the peroxidase family. Classical plant (class III) peroxidase subfamily. The cofactor is heme b. It depends on Ca(2+) as a cofactor.

Its subcellular location is the secreted. The catalysed reaction is 2 a phenolic donor + H2O2 = 2 a phenolic radical donor + 2 H2O. Removal of H(2)O(2), oxidation of toxic reductants, biosynthesis and degradation of lignin, suberization, auxin catabolism, response to environmental stresses such as wounding, pathogen attack and oxidative stress. These functions might be dependent on each isozyme/isoform in each plant tissue. In Arabidopsis thaliana (Mouse-ear cress), this protein is Peroxidase 41 (PER41).